We begin with the raw amino-acid sequence, 528 residues long: Esterase PE16 (528 aa).

In terms of domain architecture, PE spans 1-93; that stretch reads MSFVFAVPEM…AGWYVDAEAA (93 aa). The segment at 94 to 143 is linker; it reads NAALVDTAATGASELGSGGRTALILGSTGTPRPPFDYMQQVYDRYIAPHY. The PE-PPE domain occupies 149–369; that stretch reads SGLYTPAQFQ…LRAIIELGYD (221 aa). Serine 199 is an active-site residue. Residues 503-523 traverse the membrane as a helical segment; that stretch reads IALLVFAAGIPAVAAVAILTG.

The protein belongs to the mycobacterial PE family.

The protein resides in the membrane. It catalyses the reaction a hexanoate ester + H2O = an aliphatic alcohol + hexanoate + H(+). The catalysed reaction is an octanoate ester + H2O = an aliphatic alcohol + octanoate + H(+). The enzyme catalyses a butanoate ester + H2O = an aliphatic alcohol + butanoate + H(+). Esterase activity is significantly inhibited by the serine modifier phenylmethylsulfonyl fluoride (PMSF). Functionally, esterase that hydrolyzes short to medium chain fatty acid esters with the highest specific activity for p-nitrophenyl caproate (pNPC6). Has lower activity with p-nitrophenyl caprylate (pNPC8) and p-nitrophenyl butyrate (pNPC4). Has weak activity with p-nitrophenyl caprate (pNPC10) and p-nitrophenyl laurate (pNPC12). Does not possess lipolytic activity and cutinase activity. This is Esterase PE16 from Mycobacterium tuberculosis (strain ATCC 25618 / H37Rv).